Here is a 380-residue protein sequence, read N- to C-terminus: Large ribosomal subunit protein mL38 (380 aa).

The N-terminal 26 residues, Met-1–Ser-26, are a transit peptide targeting the mitochondrion. The stretch at Ser-98–Ala-123 forms a coiled coil.

It belongs to the phosphatidylethanolamine-binding protein family. Mitochondrion-specific ribosomal protein mL38 subfamily. As to quaternary structure, component of the mitochondrial ribosome large subunit (39S) which comprises a 16S rRNA and about 50 distinct proteins.

Its subcellular location is the mitochondrion. This Rattus norvegicus (Rat) protein is Large ribosomal subunit protein mL38 (Mrpl38).